The primary structure comprises 611 residues: MGLKAAQKTLFPLRSIDDVVRLFAAELGREEPDLVLLSLVLGFVEHFLAVNRVIPTNVPELTFQPSPAPDPPGGLTYFPVADLSIIAALYARFTAQIRGAVDLSLYPREGGVSSRELVKKVSDVIWNSLSRSYFKDRAHIQSLFSFITGTKLDSSGVAFAVVGACQALGLRDVHLALSEDHAWVVFGPNGEQTAEVTWHGKGNEDRRGQTVNAGVAERSWLYLKGSYMRCDRKMEVAFMVCAINPSIDLHTDSLELLQLQQKLLWLLYDLGHLERYPMALGNLADLEELEPTPGRPDPLTLYHKGIASAKTYYQDEHIYPYMYLAGYHCRNRNVREALQAWADTATVIQDYNYCREDEEIYKEFFEVANDVIPNLLKEAASLLETGEERTGEQAQGTQGQGSALQDPECFAHLLRFYDGICKWEEGSPTPVLHVGWATFLVQSLGRFEGQVRQKVHIVSREAEAAEAEEPWGDEAREGRRRGPRRESKPEEPPPPKKPALDKGPGSGQSAGSGPPRKTSGTVPGTTRGGQEVGNAAQAPAPAASPPPEGPVLTFQSEKMKGMKELLVATKINSSAIKLQLTAQSQVQMKKQKVSTPSDYTLSFLKRQRKGL.

The interaction with FANCD2 stretch occupies residues 214–390; sequence GVAERSWLYL…SLLETGEERT (177 aa). The disordered stretch occupies residues 460 to 553; the sequence is REAEAAEAEE…SPPPEGPVLT (94 aa). Over residues 484-500 the composition is skewed to basic and acidic residues; sequence RRESKPEEPPPPKKPAL. 2 positions are modified to phosphoserine: Ser487 and Ser544. A Phosphothreonine modification is found at Thr595.

Component of the MLL-HCF complex, at least composed of KMT2A/MLL1, MEN1, ASH2L, RBBP5, DPY30, WDR5, HCFC1 and HCFC2. Component of the menin-associated histone methyltransferase complex, at least composed of KMT2B/MLL4, MEN1, ASH2L, RBBP5, DPY30 and WDR5. Interacts with POLR2B. Interacts with POLR2A phosphorylated at 'Ser-5', but not with the unphosphorylated, nor 'Ser-2' phosphorylated POLR2A forms. Interacts with FANCD2 and DBF4. Interacts with SMAD3, but not with SMAD2, nor SMAD4. Directly interacts with NFKB1, NFKB2 and RELA. Interacts with JUND (via MBM motif); inhibits the interaction of JUND with MAPK10 and the phosphorylation of JUND by MAP kinases MAPK8 and MAPK10. Interacts with KMT2A (via MBM motif). The KMT2A-MEN1 complex interacts with PSIP1 with a greater affinity as MEN1 enhances interaction of KMT2A with PSIP1. As to expression, widely expressed, with high levels in hippocampus, cerebral cortex, testis and thymus (at protein level). Also expressed at high levels in pancreatic islets, ovary and bone marrow. In the brain, highest expression in hippocampus pyramidal nerve cells (at protein level). In the testis, may be expressed in spermatogonia (at protein level). Low expression, if any, in skeletal muscle.

It localises to the nucleus. Functionally, essential component of a MLL/SET1 histone methyltransferase (HMT) complex, a complex that specifically methylates 'Lys-4' of histone H3 (H3K4). Functions as a transcriptional regulator. Binds to the TERT promoter and represses telomerase expression. Plays a role in TGFB1-mediated inhibition of cell-proliferation, possibly regulating SMAD3 transcriptional activity. Represses JUND-mediated transcriptional activation on AP1 sites, as well as that mediated by NFKB subunit RELA. Positively regulates HOXC8 and HOXC6 gene expression. May be involved in normal hematopoiesis through the activation of HOXA9 expression. May be involved in DNA repair. In Mus musculus (Mouse), this protein is Menin (Men1).